The sequence spans 232 residues: Very-long-chain (3R)-3-hydroxyacyl-CoA dehydratase 4 (232 aa).

The Cytoplasmic portion of the chain corresponds to 1–19 (MGPLALPAWLQPRYRKNAY). The chain crosses the membrane as a helical span at residues 20 to 40 (LFIYYLIQFCGHSWIFTNMTV). Over 41–56 (RFFSFGKDSMVDTFYA) the chain is Lumenal. Residues 57 to 77 (IGLVMRLCQSVSLLELLHIYV) form a helical membrane-spanning segment. At 78-112 (GIESNHLLPRFLQLTERIIILFVVITSQEEVQEKY) the chain is on the cytoplasmic side. A helical transmembrane segment spans residues 113-133 (VVCVLFVFWNLLDMVRYTYSM). Residues 134-135 (LS) are Lumenal-facing. Residues 136–156 (VIGISYAVLTWLSQTLWMPIY) form a helical membrane-spanning segment. The active site involves Tyr-156. A topological domain (cytoplasmic) is located at residue Pro-157. Residues 158-178 (LCVLAEAFAIYQSLPYFESFG) traverse the membrane as a helical segment. Glu-163 is a catalytic residue. Residues 179–189 (TYSTKLPFDLS) lie on the Lumenal side of the membrane. Residues 190-210 (IYFPYVLKIYLMMLFIGMYFT) form a helical membrane-spanning segment. Over 211 to 232 (YSHLYSERRDILGIFPIKKKKM) the chain is Cytoplasmic.

Belongs to the very long-chain fatty acids dehydratase HACD family. May interact with enzymes of the ELO family (including ELOVL1); with those enzymes that mediate condensation, the first of the four steps of the reaction cycle responsible for fatty acids elongation, may be part of a larger fatty acids elongase complex. Highly expressed in leukocytes, and low expression in heart, spleen, kidney, and placenta.

The protein localises to the endoplasmic reticulum membrane. It catalyses the reaction a very-long-chain (3R)-3-hydroxyacyl-CoA = a very-long-chain (2E)-enoyl-CoA + H2O. The catalysed reaction is (3R)-hydroxyhexadecanoyl-CoA = (2E)-hexadecenoyl-CoA + H2O. It functions in the pathway lipid metabolism; fatty acid biosynthesis. Functionally, catalyzes the third of the four reactions of the long-chain fatty acids elongation cycle. This endoplasmic reticulum-bound enzymatic process, allows the addition of two carbons to the chain of long- and very long-chain fatty acids/VLCFAs per cycle. This enzyme catalyzes the dehydration of the 3-hydroxyacyl-CoA intermediate into trans-2,3-enoyl-CoA, within each cycle of fatty acid elongation. Thereby, it participates in the production of VLCFAs of different chain lengths that are involved in multiple biological processes as precursors of membrane lipids and lipid mediators. The polypeptide is Very-long-chain (3R)-3-hydroxyacyl-CoA dehydratase 4 (Homo sapiens (Human)).